Reading from the N-terminus, the 406-residue chain is MVSAKLPSIFIEAQLPLIYANIILAFALGPQAHTFRVCLTLPILLFLVCQSLYREQNGPWEDLLSNNSLVMFTVFVYIDWILLQSPDREQWHKLNNAKTESNGPTKAKESGPPHGFFQRIWFGCRIATAWRYIGWSCQVKNVPMEHSAGYPRRYFIARKSLRALAFYLMKETLEVYTASTPHGGWWDTQNTKPALSIKNVPLWHQFKYTWVHIFLAYATLEMANSILGVVSVILHLATPQECPSAFGDLEDFFTVRKAWSTVWHQHMRRLTSTMGLFVARDLMQLRKGSFQSKYVQLFVGFGVSAGLHAGVALLCSKALNDDSALFFFGIQAPIIMLEDHVIAKGKSLGFKDSPLWRFIGFVWTTLAIGFTCRAWVGSMIDNGMWVHARKKDSVIQGLLINAIQQP.

6 consecutive transmembrane segments (helical) span residues 9–29, 32–52, 63–83, 295–315, 323–343, and 358–378; these read IFIE…FALG, AHTF…CQSL, LLSN…WILL, VQLF…ALLC, SALF…HVIA, and FIGF…WVGS.

This sequence belongs to the wax synthase family.

It localises to the membrane. The protein operates within mycotoxin biosynthesis. In terms of biological role, acetyltransferase; part of the gene cluster that mediates the biosynthesis of sirodesmin PL, an epipolythiodioxopiperazine (ETP) characterized by a disulfide bridged cyclic dipeptide and that acts as a phytotoxin which is involved in the blackleg didease of canola. SirD catalyzes the O-prenylation of L-tyrosine (L-Tyr) in the presence of dimethylallyl diphosphate (DMAPP) to yield 4-O-dimethylallyl-L-Tyr, and therefore represents probably the first pathway-specific enzyme in the biosynthesis of sirodesmin PL. 4-O-dimethylallyl-L-Tyr, then undergoes condensation with L-Ser in a reaction catalyzed by the non-ribosomal peptide synthase sirP to form the diketopiperazine (DKP) backbone. Further bishydroxylation of the DKP performed by the cytochrome P450 monooxygenase sirC leads to the production of the intermediate phomamide. This step is essential to form the reactive thiol group required for toxicity of sirodesmin PL. The next steps of sirodesmin biosynthesis are not well understood yet, but some predictions could be made from intermediate compounds identification. Phomamide is converted into phomalizarine via oxidation, probably by sirT. Further oxidation, methylation (by sirM or sirN) and reduction steps convert phomalizarine to deacetyl sirodesmin. Finally, acetyltransferase sirH probably acetylates deacetyl sirodesmin to produce sirodesmin PL. In Leptosphaeria maculans (Blackleg fungus), this protein is Acetyltransferase sirH.